Reading from the N-terminus, the 278-residue chain is Hydroxyethylthiazole kinase (278 aa).

Substrate is bound at residue Met51. 2 residues coordinate ATP: Arg127 and Ser173. Gly201 serves as a coordination point for substrate.

Belongs to the Thz kinase family. Requires Mg(2+) as cofactor.

The catalysed reaction is 5-(2-hydroxyethyl)-4-methylthiazole + ATP = 4-methyl-5-(2-phosphooxyethyl)-thiazole + ADP + H(+). Its pathway is cofactor biosynthesis; thiamine diphosphate biosynthesis; 4-methyl-5-(2-phosphoethyl)-thiazole from 5-(2-hydroxyethyl)-4-methylthiazole: step 1/1. In terms of biological role, catalyzes the phosphorylation of the hydroxyl group of 4-methyl-5-beta-hydroxyethylthiazole (THZ). This Leptothrix cholodnii (strain ATCC 51168 / LMG 8142 / SP-6) (Leptothrix discophora (strain SP-6)) protein is Hydroxyethylthiazole kinase.